A 753-amino-acid polypeptide reads, in one-letter code: Oligopeptide transporter 5 (753 aa).

The next 15 helical transmembrane spans lie at 56 to 76 (TWFLGMVSCVVLAFVNNFFGY), 80 to 100 (PLTVSSVVAQIITLPLGKLMA), 132 to 152 (ITIFANTGAGGAYATSILTIV), 163 to 183 (AAAMLLVQTTQLLGYGWAGMF), 224 to 244 (FFLIVFFLSFTYYIVPGYLFP), 296 to 316 (FFAIANSFGGFIIFFYIILPI), 368 to 388 (YLSILFALIYGLSFGTLTATI), 432 to 452 (WWFVAVLAASFVLALYACEGF), 461 to 481 (WGLLLACAIAFTFTLPIGVIL), 506 to 528 (PLANVAFKTYGSVSIAQALYFVG), 544 to 564 (FIVQLVATIVASTVSFGTTWW), 583 to 603 (PWTCPGDVVFYNASIIWGIIG), 615 to 635 (PGMNWFFLIGFLAPVPVWFFA), 662 to 682 (AKAVHYWSWFAVGIVFNYYIF), and 695 to 715 (ILSAALDAGTAVMGVLIYFAL).

It belongs to the oligopeptide OPT transporter (TC 2.A.67.1) family. Expressed predominantly in flowers, and at a very low level in leaves and roots.

It localises to the membrane. Involved in the translocation of tetra- and pentapeptides across the cellular membrane in an energy-dependent manner. This chain is Oligopeptide transporter 5 (OPT5), found in Arabidopsis thaliana (Mouse-ear cress).